A 124-amino-acid polypeptide reads, in one-letter code: uncharacterized protein (124 aa).

It belongs to the YciI family.

This is an uncharacterized protein from Rhizobium meliloti (strain 1021) (Ensifer meliloti).